The following is a 762-amino-acid chain: 5-methyltetrahydropteroyltriglutamate--homocysteine methyltransferase (762 aa).

5-methyltetrahydropteroyltri-L-glutamate contacts are provided by residues 16–19 (RELK) and Lys117. Residues 438–440 (IGS) and Glu491 each bind L-homocysteine. Residues 438–440 (IGS) and Glu491 contribute to the L-methionine site. 5-methyltetrahydropteroyltri-L-glutamate is bound by residues 522–523 (RC) and Trp568. Asp606 is a binding site for L-homocysteine. Position 606 (Asp606) interacts with L-methionine. Glu612 contributes to the 5-methyltetrahydropteroyltri-L-glutamate binding site. Zn(2+)-binding residues include His648, Cys650, and Glu672. The active-site Proton donor is the His701. Cys733 lines the Zn(2+) pocket.

Belongs to the vitamin-B12 independent methionine synthase family. Requires Zn(2+) as cofactor.

It carries out the reaction 5-methyltetrahydropteroyltri-L-glutamate + L-homocysteine = tetrahydropteroyltri-L-glutamate + L-methionine. It functions in the pathway amino-acid biosynthesis; L-methionine biosynthesis via de novo pathway; L-methionine from L-homocysteine (MetE route): step 1/1. Functionally, catalyzes the transfer of a methyl group from 5-methyltetrahydrofolate to homocysteine resulting in methionine formation. This is 5-methyltetrahydropteroyltriglutamate--homocysteine methyltransferase from Pseudomonas fluorescens (strain ATCC BAA-477 / NRRL B-23932 / Pf-5).